The primary structure comprises 138 residues: Transcription antitermination protein NusB (138 aa).

This sequence belongs to the NusB family.

Its function is as follows. Involved in transcription antitermination. Required for transcription of ribosomal RNA (rRNA) genes. Binds specifically to the boxA antiterminator sequence of the ribosomal RNA (rrn) operons. The polypeptide is Transcription antitermination protein NusB (Helicobacter pylori (strain ATCC 700392 / 26695) (Campylobacter pylori)).